Here is a 207-residue protein sequence, read N- to C-terminus: C-type lectin domain family 2 member D (207 aa).

Residues 1-41 are Cytoplasmic-facing; that stretch reads MCVTKASLPMLSPTGSPQEVEVGKILQGKRHGTISPESCAK. Residues S7 and S12 each carry the phosphoserine modification. The chain crosses the membrane as a helical; Signal-anchor for type II membrane protein span at residues 42-62; it reads LYCYYGVIMVLTVAVIALSVA. At 63-207 the chain is on the extracellular side; sequence LSATKTEQIP…LHCQTPFFPS (145 aa). A disulfide bridge links C80 with C91. Positions 87-202 constitute a C-type lectin domain; sequence VENKCFYFSE…LNSYSLHCQT (116 aa). N100 is a glycosylation site (N-linked (GlcNAc...) asparagine).

Homodimer; disulfide-linked. N-glycosylated. Detected in fetal heart, brain, lung, chondrocytes, perichondrium and osteoblasts, and in adult splenocytes, thymocytes, lymph-node cells, osteoblasts, growth plate chondrocytes and skeletal muscle overlying the bone (at protein level). Ubiquitous. Detected in thymus, bone marrow, lung, gut, heart, skeletal muscle, ovary, spleen, ileum, liver and kidney.

Its subcellular location is the cell membrane. Functionally, receptor for KLRB1B that protects target cells against natural killer cell-mediated lysis. Inhibits osteoclast formation. Binds high molecular weight sulfated glycosaminoglycans. The sequence is that of C-type lectin domain family 2 member D (Clec2d) from Mus musculus (Mouse).